The following is a 476-amino-acid chain: Glycogen synthase (476 aa).

Residue K15 coordinates ADP-alpha-D-glucose.

This sequence belongs to the glycosyltransferase 1 family. Bacterial/plant glycogen synthase subfamily.

The catalysed reaction is [(1-&gt;4)-alpha-D-glucosyl](n) + ADP-alpha-D-glucose = [(1-&gt;4)-alpha-D-glucosyl](n+1) + ADP + H(+). It participates in glycan biosynthesis; glycogen biosynthesis. Synthesizes alpha-1,4-glucan chains using ADP-glucose. The chain is Glycogen synthase from Streptococcus equi subsp. equi (strain 4047).